Reading from the N-terminus, the 191-residue chain is Small ribosomal subunit protein uS7 (191 aa).

A disordered region spans residues 56–80 (NKSGEQGDGDGESGGKAGGIKKRSL).

It belongs to the universal ribosomal protein uS7 family. As to quaternary structure, part of the 30S ribosomal subunit. Contacts proteins S9 and S11.

Its function is as follows. One of the primary rRNA binding proteins, it binds directly to 16S rRNA where it nucleates assembly of the head domain of the 30S subunit. Is located at the subunit interface close to the decoding center, probably blocks exit of the E-site tRNA. This chain is Small ribosomal subunit protein uS7, found in Coxiella burnetii (strain CbuK_Q154) (Coxiella burnetii (strain Q154)).